Here is a 496-residue protein sequence, read N- to C-terminus: Catalase-A (496 aa).

Catalysis depends on residues His54 and Asn128. Tyr338 is a heme binding site. The Microbody targeting signal signature appears at 494-496; the sequence is SNL.

The protein belongs to the catalase family. Requires heme as cofactor.

Its subcellular location is the peroxisome matrix. The enzyme catalyses 2 H2O2 = O2 + 2 H2O. Functionally, catalyzes the degradation of hydrogen peroxide (H(2)O(2)) generated by peroxisomal oxidases to water and oxygen, thereby protecting cells from the toxic effects of hydrogen peroxide. The chain is Catalase-A (catA) from Dictyostelium discoideum (Social amoeba).